Here is a 1140-residue protein sequence, read N- to C-terminus: Squamosa promoter-binding-like protein 15 (1140 aa).

Disordered stretches follow at residues 73–112 (RVNAGLSHHQQQQQQSPPAAAKAAEALRQGGGGSGGLNLQ) and 124–177 (DVSP…GGNS). 2 stretches are compositionally biased toward low complexity: residues 76 to 100 (AGLSHHQQQQQQSPPAAAKAAEALR) and 125 to 135 (VSPAATTVSSS). The segment covering 164-177 (ASGGGGGGGGGGNS) has biased composition (gly residues). An SBP-type zinc finger spans residues 184–261 (YPMCQVDDCR…AGHNRRRRKT (78 aa)). Zn(2+) contacts are provided by Cys187, Cys192, Cys209, His212, Cys228, Cys231, His235, and Cys247. Positions 244–260 (KRSCRRRLAGHNRRRRK) match the Bipartite nuclear localization signal motif. 4 disordered regions span residues 327 to 382 (NNGN…ADGF), 403 to 472 (TSNP…TPPY), 496 to 517 (LSSESSNPLDERSPSSSPPVTH), and 558 to 597 (KDSERPIENGSPPNPAYQSCYTSTSCSDHSPSTSNSDGQD). Residues 345-375 (ASHSQQQDSVQRTTNGFEKQTNGLDKQTNGF) show a composition bias toward polar residues. Over residues 403–430 (TSNPDSNTSQSQGSSDSSGNNKSKSQST) the composition is skewed to low complexity. The segment covering 450-466 (RKNDALERSPEMYKQPD) has biased composition (basic and acidic residues). Residues 496–514 (LSSESSNPLDERSPSSSPP) are compositionally biased toward polar residues. The segment covering 579–593 (TSTSCSDHSPSTSNS) has biased composition (low complexity).

As to expression, expressed in stems, leaf sheaths, and young panicles.

It is found in the nucleus. Its function is as follows. Trans-acting factor that binds specifically to the consensus nucleotide sequence 5'-TNCGTACAA-3'. The sequence is that of Squamosa promoter-binding-like protein 15 (SPL15) from Oryza sativa subsp. indica (Rice).